Here is a 325-residue protein sequence, read N- to C-terminus: MKVSIIGSTGRVGRATALCLAEEEAVKTLHLISRKESLEQNLGEVLDMSDALAAKGVSVKLENSADIENVYGSRIVVITAGVPRTADMDRDDLAFKNGRIVADYARQIARFAPDSIILVVTNPVDVMTYVALRYSGFHPSRVFGLGNHLDSLRLKNYMARHFNVHVSEVHTRVIGQHGPYMVPLISSTSIGGIPIEHYARRDYFSGYKKFDLKKTIDKVIHAGSNIISRKGATEYGPAFAISNIVTTILNDERRILTVSTLMEGEIDGIRDVCLGVPVKLGKNGIEGVVPVLMDRDEREAFREAANHVRDSTRRVMEFLDEELPL.

7–13 lines the NADP(+) pocket; it reads GSTGRVG. Substrate is bound by residues R84 and R90. Residues N97 and 120–122 contribute to the NADP(+) site; that span reads VTN. 2 residues coordinate substrate: N122 and R153. The active-site Proton acceptor is the H177.

Belongs to the LDH/MDH superfamily.

It carries out the reaction (S)-malate + NADP(+) = oxaloacetate + NADPH + H(+). The catalysed reaction is (S)-malate + NAD(+) = oxaloacetate + NADH + H(+). In terms of biological role, catalyzes the reversible oxidation of malate to oxaloacetate. The protein is Malate dehydrogenase (mdh) of Methanothermobacter thermautotrophicus (strain ATCC 29096 / DSM 1053 / JCM 10044 / NBRC 100330 / Delta H) (Methanobacterium thermoautotrophicum).